Here is a 323-residue protein sequence, read N- to C-terminus: MKNLTLHQLKVFEAAARHSSFTRAAEELYLTQPTVSIQVKQLTKAVGLPLFEQIGKRLYLTEAGRQLYKTTRQVFEQLEQLDMTIADLQGMKQGQLRLAVITTAKYFIPRLIGPFCQRYPGINVSLKVTNHEGLINRINDNLDDLYVLSRPPSGFDITVQPFLDNPLVVVGPASHPLANQRGISLERLAQEPFILRERGSGTREATEQLFAAHNLNLNVKLDLGSNEAIKQAILGGLGLAVLSYHTLTSAGATPELKMFEVEGFPIHRQWHAVYPAGKQLSTVAATFLDYLLTESQRIAADIQIPESTTTDPELDAPQPVVGV.

The HTH lysR-type domain occupies 4–61 (LTLHQLKVFEAAARHSSFTRAAEELYLTQPTVSIQVKQLTKAVGLPLFEQIGKRLYLT). The H-T-H motif DNA-binding region spans 21 to 40 (FTRAAEELYLTQPTVSIQVK). A disordered region spans residues 304-323 (IPESTTTDPELDAPQPVVGV).

This sequence belongs to the LysR transcriptional regulatory family.

It is found in the cytoplasm. Activates transcription of the cmpABCD operon under carbon dioxide-limited conditions. The chain is HTH-type transcriptional activator CmpR (cmpR) from Synechococcus elongatus (strain ATCC 33912 / PCC 7942 / FACHB-805) (Anacystis nidulans R2).